The chain runs to 398 residues: UPF0496 protein At5g66660 (398 aa).

The next 2 membrane-spanning stretches (helical) occupy residues 240–260 (VFFA…TTMS) and 263–283 (PVVC…GKWF).

The protein belongs to the UPF0496 family.

The protein resides in the membrane. The protein is UPF0496 protein At5g66660 of Arabidopsis thaliana (Mouse-ear cress).